A 354-amino-acid polypeptide reads, in one-letter code: Isopentenyl-diphosphate delta-isomerase (354 aa).

A substrate-binding site is contributed by lysine 11–lysine 12. Residues serine 67, serine 68–threonine 70, serine 98, and asparagine 126 contribute to the FMN site. Serine 98–lysine 100 provides a ligand contact to substrate. Glutamine 160 serves as a coordination point for substrate. Glutamate 161 lines the Mg(2+) pocket. Residues lysine 192, threonine 222, and alanine 289–alanine 290 contribute to the FMN site.

This sequence belongs to the IPP isomerase type 2 family. As to quaternary structure, homooctamer. Dimer of tetramers. FMN serves as cofactor. The cofactor is NADPH. It depends on Mg(2+) as a cofactor.

It is found in the cytoplasm. It catalyses the reaction isopentenyl diphosphate = dimethylallyl diphosphate. In terms of biological role, involved in the biosynthesis of isoprenoids. Catalyzes the 1,3-allylic rearrangement of the homoallylic substrate isopentenyl (IPP) to its allylic isomer, dimethylallyl diphosphate (DMAPP). This chain is Isopentenyl-diphosphate delta-isomerase, found in Borrelia garinii subsp. bavariensis (strain ATCC BAA-2496 / DSM 23469 / PBi) (Borreliella bavariensis).